A 235-amino-acid polypeptide reads, in one-letter code: tRNA pseudouridine synthase B (235 aa).

Asp-45 serves as the catalytic Nucleophile.

It belongs to the pseudouridine synthase TruB family. Type 1 subfamily.

The enzyme catalyses uridine(55) in tRNA = pseudouridine(55) in tRNA. Responsible for synthesis of pseudouridine from uracil-55 in the psi GC loop of transfer RNAs. In Chlamydia felis (strain Fe/C-56) (Chlamydophila felis), this protein is tRNA pseudouridine synthase B.